We begin with the raw amino-acid sequence, 359 residues long: Phospho-N-acetylmuramoyl-pentapeptide-transferase (359 aa).

The next 10 helical transmembrane spans lie at 27 to 47, 71 to 91, 93 to 113, 134 to 154, 170 to 190, 203 to 223, 234 to 254, 262 to 282, 286 to 306, and 336 to 356; these read IGAA…FIRT, VPTM…LLWA, LDNP…MIGA, LLLQ…HPGY, LGWF…NAVN, MVVS…VVLA, SGEL…FLWF, FMGD…AIII, FLLA…MLQV, and KVVV…IATL.

It belongs to the glycosyltransferase 4 family. MraY subfamily. Requires Mg(2+) as cofactor.

The protein localises to the cell inner membrane. It catalyses the reaction UDP-N-acetyl-alpha-D-muramoyl-L-alanyl-gamma-D-glutamyl-meso-2,6-diaminopimeloyl-D-alanyl-D-alanine + di-trans,octa-cis-undecaprenyl phosphate = di-trans,octa-cis-undecaprenyl diphospho-N-acetyl-alpha-D-muramoyl-L-alanyl-D-glutamyl-meso-2,6-diaminopimeloyl-D-alanyl-D-alanine + UMP. It functions in the pathway cell wall biogenesis; peptidoglycan biosynthesis. Functionally, catalyzes the initial step of the lipid cycle reactions in the biosynthesis of the cell wall peptidoglycan: transfers peptidoglycan precursor phospho-MurNAc-pentapeptide from UDP-MurNAc-pentapeptide onto the lipid carrier undecaprenyl phosphate, yielding undecaprenyl-pyrophosphoryl-MurNAc-pentapeptide, known as lipid I. In Desulfotalea psychrophila (strain LSv54 / DSM 12343), this protein is Phospho-N-acetylmuramoyl-pentapeptide-transferase.